Reading from the N-terminus, the 70-residue chain is DNA gyrase inhibitor YacG (70 aa).

Zn(2+) contacts are provided by Cys-21, Cys-24, Cys-36, and Cys-40.

This sequence belongs to the DNA gyrase inhibitor YacG family. Interacts with GyrB. Zn(2+) is required as a cofactor.

Functionally, inhibits all the catalytic activities of DNA gyrase by preventing its interaction with DNA. Acts by binding directly to the C-terminal domain of GyrB, which probably disrupts DNA binding by the gyrase. This Sinorhizobium medicae (strain WSM419) (Ensifer medicae) protein is DNA gyrase inhibitor YacG.